The sequence spans 129 residues: Small ribosomal subunit protein uS9 (129 aa).

The span at 104–113 (TRDSRVVERK) shows a compositional bias: basic and acidic residues. Residues 104–129 (TRDSRVVERKKPGKRKARRSRQFSKR) are disordered. The segment covering 114-129 (KPGKRKARRSRQFSKR) has biased composition (basic residues).

This sequence belongs to the universal ribosomal protein uS9 family.

The protein is Small ribosomal subunit protein uS9 of Sulfurimonas denitrificans (strain ATCC 33889 / DSM 1251) (Thiomicrospira denitrificans (strain ATCC 33889 / DSM 1251)).